We begin with the raw amino-acid sequence, 268 residues long: Indole-3-glycerol phosphate synthase (268 aa).

This sequence belongs to the TrpC family.

The catalysed reaction is 1-(2-carboxyphenylamino)-1-deoxy-D-ribulose 5-phosphate + H(+) = (1S,2R)-1-C-(indol-3-yl)glycerol 3-phosphate + CO2 + H2O. Its pathway is amino-acid biosynthesis; L-tryptophan biosynthesis; L-tryptophan from chorismate: step 4/5. The protein is Indole-3-glycerol phosphate synthase of Acinetobacter baumannii (strain AB0057).